Reading from the N-terminus, the 563-residue chain is Delta-1-pyrroline-5-carboxylate dehydrogenase, mitochondrial (563 aa).

The N-terminal 24 residues, 1 to 24, are a transit peptide targeting the mitochondrion; that stretch reads MLLRSAALCRALLARRGRAAGLCR. Serine 44 is subject to Phosphoserine. At lysine 52 the chain carries N6-acetyllysine. 5 positions are modified to N6-acetyllysine; alternate: lysine 93, lysine 99, lysine 114, lysine 130, and lysine 175. An N6-succinyllysine; alternate mark is found at lysine 93, lysine 99, lysine 114, lysine 130, and lysine 175. NAD(+) contacts are provided by residues serine 208, lysine 233, and 286-290; that span reads GSVPT. The active-site Proton acceptor is the glutamate 314. Lysine 318 is subject to N6-acetyllysine. Lysine 347 carries the N6-succinyllysine modification. Residue cysteine 348 is the Nucleophile of the active site. N6-acetyllysine occurs at positions 365 and 376. An N6-succinyllysine modification is found at lysine 395. Glutamate 447 serves as a coordination point for NAD(+). Lysine 509 is modified (N6-acetyllysine; alternate). Lysine 509 is subject to N6-succinyllysine; alternate. Serine 513 is a binding site for substrate. An N6-acetyllysine modification is found at lysine 531.

This sequence belongs to the aldehyde dehydrogenase family. In terms of assembly, homodimer.

The protein localises to the mitochondrion matrix. It carries out the reaction L-glutamate 5-semialdehyde + NAD(+) + H2O = L-glutamate + NADH + 2 H(+). The protein operates within amino-acid degradation; L-proline degradation into L-glutamate; L-glutamate from L-proline: step 2/2. Its function is as follows. Irreversible conversion of delta-1-pyrroline-5-carboxylate (P5C), derived either from proline or ornithine, to glutamate. This is a necessary step in the pathway interconnecting the urea and tricarboxylic acid cycles. The preferred substrate is glutamic gamma-semialdehyde, other substrates include succinic, glutaric and adipic semialdehydes. The polypeptide is Delta-1-pyrroline-5-carboxylate dehydrogenase, mitochondrial (ALDH4A1) (Bos taurus (Bovine)).